The primary structure comprises 428 residues: 3-phosphoshikimate 1-carboxyvinyltransferase (428 aa).

Residues Lys-20, Ser-21, and Arg-25 each contribute to the 3-phosphoshikimate site. Lys-20 contributes to the phosphoenolpyruvate binding site. 2 residues coordinate phosphoenolpyruvate: Gly-93 and Arg-122. Ser-167, Gln-169, Asp-317, and Lys-344 together coordinate 3-phosphoshikimate. Gln-169 is a binding site for phosphoenolpyruvate. Catalysis depends on Asp-317, which acts as the Proton acceptor. Residues Arg-348 and Arg-390 each coordinate phosphoenolpyruvate.

This sequence belongs to the EPSP synthase family. In terms of assembly, monomer.

It is found in the cytoplasm. It carries out the reaction 3-phosphoshikimate + phosphoenolpyruvate = 5-O-(1-carboxyvinyl)-3-phosphoshikimate + phosphate. It participates in metabolic intermediate biosynthesis; chorismate biosynthesis; chorismate from D-erythrose 4-phosphate and phosphoenolpyruvate: step 6/7. Its function is as follows. Catalyzes the transfer of the enolpyruvyl moiety of phosphoenolpyruvate (PEP) to the 5-hydroxyl of shikimate-3-phosphate (S3P) to produce enolpyruvyl shikimate-3-phosphate and inorganic phosphate. In Leptospira biflexa serovar Patoc (strain Patoc 1 / ATCC 23582 / Paris), this protein is 3-phosphoshikimate 1-carboxyvinyltransferase.